The following is a 275-amino-acid chain: NH(3)-dependent NAD(+) synthetase (275 aa).

46–53 (GISGGQDS) provides a ligand contact to ATP. A Mg(2+)-binding site is contributed by D52. Position 140 (R140) interacts with deamido-NAD(+). T160 is a binding site for ATP. E165 is a binding site for Mg(2+). Residues K173 and D180 each contribute to the deamido-NAD(+) site. ATP is bound by residues K189 and T211. Position 260–261 (260–261 (HK)) interacts with deamido-NAD(+).

This sequence belongs to the NAD synthetase family. As to quaternary structure, homodimer.

The enzyme catalyses deamido-NAD(+) + NH4(+) + ATP = AMP + diphosphate + NAD(+) + H(+). Its pathway is cofactor biosynthesis; NAD(+) biosynthesis; NAD(+) from deamido-NAD(+) (ammonia route): step 1/1. In terms of biological role, catalyzes the ATP-dependent amidation of deamido-NAD to form NAD. Uses ammonia as a nitrogen source. The protein is NH(3)-dependent NAD(+) synthetase of Escherichia coli (strain K12 / MC4100 / BW2952).